The primary structure comprises 234 residues: uncharacterized protein (234 aa).

LRR repeat units follow at residues 44–63, 64–84, 85–107, and 111–134; these read LEFL…LPKL, KLRK…EKCP, NLTH…PLKQ, and LKSL…VFKL. The disordered stretch occupies residues 161-234; it reads EGLDDEEEGE…GEEERGQKRK (74 aa). The segment covering 163–226 has biased composition (acidic residues); the sequence is LDDEEEGEHE…GEEDEEELGE (64 aa).

The protein belongs to the ANP32 family. In terms of tissue distribution, expressed in activated stem cells, such as mobilized CD34+ cells and cord blood CD34+ cells, but not in resting bone marrow CD34+ cells. Expressed in a variety of neoplastic cell lines, mainly in prostatic adenocarcinoma cell lines. Not expressed in normal prostatic tissue.

This is an uncharacterized protein from Homo sapiens (Human).